A 495-amino-acid polypeptide reads, in one-letter code: Glutamate--tRNA ligase (495 aa).

Positions 14–24 (PSPTGYLHIGS) match the 'HIGH' region motif. The short motif at 255–259 (KLSKR) is the 'KMSKS' region element. Position 258 (K258) interacts with ATP.

It belongs to the class-I aminoacyl-tRNA synthetase family. Glutamate--tRNA ligase type 1 subfamily. Monomer.

It is found in the cytoplasm. The enzyme catalyses tRNA(Glu) + L-glutamate + ATP = L-glutamyl-tRNA(Glu) + AMP + diphosphate. Its function is as follows. Catalyzes the attachment of glutamate to tRNA(Glu) in a two-step reaction: glutamate is first activated by ATP to form Glu-AMP and then transferred to the acceptor end of tRNA(Glu). The polypeptide is Glutamate--tRNA ligase (Herpetosiphon aurantiacus (strain ATCC 23779 / DSM 785 / 114-95)).